The following is a 181-amino-acid chain: Isopentenyl-diphosphate Delta-isomerase (181 aa).

Histidine 25 and histidine 32 together coordinate Mn(2+). One can recognise a Nudix hydrolase domain in the interval 30 to 164 (PLHLAFSCWL…PWAFSPWMVM (135 aa)). Cysteine 67 is an active-site residue. Cysteine 67 contacts Mg(2+). Histidine 69 is a Mn(2+) binding site. Glutamate 87 provides a ligand contact to Mg(2+). Residues glutamate 114 and glutamate 116 each contribute to the Mn(2+) site. Residue glutamate 116 is part of the active site.

Belongs to the IPP isomerase type 1 family. As to quaternary structure, homodimer. Mg(2+) is required as a cofactor. It depends on Mn(2+) as a cofactor.

Its subcellular location is the cytoplasm. The catalysed reaction is isopentenyl diphosphate = dimethylallyl diphosphate. Its pathway is isoprenoid biosynthesis; dimethylallyl diphosphate biosynthesis; dimethylallyl diphosphate from isopentenyl diphosphate: step 1/1. Its function is as follows. Catalyzes the 1,3-allylic rearrangement of the homoallylic substrate isopentenyl (IPP) to its highly electrophilic allylic isomer, dimethylallyl diphosphate (DMAPP). This is Isopentenyl-diphosphate Delta-isomerase from Salmonella choleraesuis (strain SC-B67).